Consider the following 776-residue polypeptide: MDRVWRAWDGQSFKENQPESPSARGIVVSWLSRAEWEQVTVYLFCDDHKLQQYALNRITVWRSRLGNELPLAVASTADLVRCKLIDAAGTLGTDELRLLYGMALVRFVNLISERKTKCSNLPLKYLAQEVNIPDWIVELRHNLTHKKMPHINECRRGCYFVLNWLQKTYWSRQLEGSLKETWELDEDQLDAEDPEEEEREIIADDVLEEIPEPQDDDKDEELAVEDDANTKGNEEVASHPEPSSRHKELYEKARELLVSYEEEQFKVLEKHRHLLQAIKVWNNLSPRVQCILEELKSISWENRDAVLDAFLDDGFLIPTFEQLAALQIEYEDGQTEVQKGEVTEPNSHKNIDLNEVLVPKPFSQFWQPLLRGLHSQTFTQALLERMFSELSTVGSTGIRPTYILRWTVELIVANTKTGRNARRFSASQWEARKSWRLFNCSATLDWPQVIESCLGSPCWASPQLLQVVFKAMGQVLPDEEQEKLLRVCSIYTQNGENGLAKAIEGSSSSSTGKAPYTLDTLHEDLQPPGTNCESEESIQQKEQGNLKDVKQEEKKENEEEEKEEEEMEEEEEEEEEEKEEEEEEQEQEEHQEEEQEEEEEEENQKVFQDQMEADVEESDDVEEEEEVDDEEEDEDDDYDDDEEEDRMEVGAFSLAQGSSVFENTRTTSRKREALQGSAWQVSSEDVRWGTFPLGRLPGQTEDPAELMLDNYDTMYLLDQPVIEHRLEPQKSKSSTLSLCCGGSNTNSSSSSSSGNMEGLLWNQGQMHGLKAGLQLF.

The segment covering 185–227 has biased composition (acidic residues); that stretch reads DEDQLDAEDPEEEEREIIADDVLEEIPEPQDDDKDEELAVEDD. The tract at residues 185 to 247 is disordered; that stretch reads DEDQLDAEDP…SHPEPSSRHK (63 aa). Residues 228–247 show a composition bias toward basic and acidic residues; sequence ANTKGNEEVASHPEPSSRHK. Residues S425 and S509 each carry the phosphoserine modification. The segment at 501–646 is disordered; that stretch reads KAIEGSSSSS…DYDDDEEEDR (146 aa). The span at 544 to 557 shows a compositional bias: basic and acidic residues; that stretch reads GNLKDVKQEEKKEN. 2 stretches are compositionally biased toward acidic residues: residues 558–602 and 611–646; these read EEEE…EEEE and MEADVEESDDVEEEEEVDDEEEDEDDDYDDDEEEDR. S658 bears the Phosphoserine mark. Positions 677–696 are interaction with NOL9; it reads SAWQVSSEDVRWGTFPLGRL. The interval 733–759 is disordered; that stretch reads SSTLSLCCGGSNTNSSSSSSSGNMEGL. A compositionally biased stretch (low complexity) spans 741–755; that stretch reads GGSNTNSSSSSSSGN.

The protein belongs to the LAS1 family. Component of some MLL1/MLL complex, at least composed of the core components KMT2A/MLL1, ASH2L, HCFC1/HCF1, WDR5 and RBBP5, as well as the facultative components BACC1, CHD8, E2F6, HSP70, INO80C, KANSL1, LAS1L, MAX, MCRS1, MGA, MYST1/MOF, PELP1, PHF20, PRP31, RING2, RUVB1/TIP49A, RUVB2/TIP49B, SENP3, TAF1, TAF4, TAF6, TAF7, TAF9 and TEX10. Component of the 5FMC complex, at least composed of PELP1, LAS1L, TEX10, WDR18 and SENP3; the complex interacts with methylated CHTOP and ZNF148. Interacts with NOL9 to form an ITS2 pre-rRNA endonuclease-kinase complex.

It localises to the nucleus. Its subcellular location is the nucleolus. The protein resides in the nucleoplasm. The protein localises to the cytoplasm. In terms of biological role, required for the synthesis of the 60S ribosomal subunit and maturation of the 28S rRNA. Functions as a component of the Five Friends of Methylated CHTOP (5FMC) complex; the 5FMC complex is recruited to ZNF148 by methylated CHTOP, leading to desumoylation of ZNF148 and subsequent transactivation of ZNF148 target genes. Required for the efficient pre-rRNA processing at both ends of internal transcribed spacer 2 (ITS2). This chain is Ribosomal biogenesis protein LAS1L (Las1l), found in Mus musculus (Mouse).